The following is a 176-amino-acid chain: dCTP deaminase (176 aa).

Residues 99-104 (RSTLAR) and D115 each bind dCTP. E125 serves as the catalytic Proton donor/acceptor. Q163 lines the dCTP pocket.

The protein belongs to the dCTP deaminase family. In terms of assembly, homotrimer.

It catalyses the reaction dCTP + H2O + H(+) = dUTP + NH4(+). The protein operates within pyrimidine metabolism; dUMP biosynthesis; dUMP from dCTP (dUTP route): step 1/2. In terms of biological role, catalyzes the deamination of dCTP to dUTP. This Pyrobaculum aerophilum (strain ATCC 51768 / DSM 7523 / JCM 9630 / CIP 104966 / NBRC 100827 / IM2) protein is dCTP deaminase.